The primary structure comprises 361 residues: MNKTVVVAMSGGVDSSVVAYLLKNYTSYKVLGLFMKNWEEEDGEGLCSTAKDYEDVEKVAGQLDIPYYTVSFAKEYRERVFSRFLTGYSEGYTPNPDVLCNREIKFDLLQKKVRELGGDFLATGHYCRVSPDENGVNLLRGIDPQKDQSYFLCGTRKESLENVIFPLGDKTKTEVRSIAAQAGLATAQKRDSTGICFIGKRPFKSFLEKFVPNLEGNIVDYDSQRVVGHHEGAHYYTIGQRRGLDLGGSEKPCYVVGKDMEKNIVYIVRGEDHPLLYQTELTARELNWFVSPKSITTCSAKVRYRSNDEECEILLRGEDEVLVRFASPVKAITPGQAIAFYDGERCLGGGVIEISMTPQSV.

ATP is bound by residues 8–15 and Met35; that span reads AMSGGVDS. Positions 95–97 are interaction with target base in tRNA; it reads NPD. The active-site Nucleophile is the Cys100. Cys100 and Cys196 are joined by a disulfide. Gly124 contacts ATP. The interval 146-148 is interaction with tRNA; sequence KDQ. Cys196 functions as the Cysteine persulfide intermediate in the catalytic mechanism. The tract at residues 303–304 is interaction with tRNA; sequence RY.

It belongs to the MnmA/TRMU family.

The protein resides in the cytoplasm. It carries out the reaction S-sulfanyl-L-cysteinyl-[protein] + uridine(34) in tRNA + AH2 + ATP = 2-thiouridine(34) in tRNA + L-cysteinyl-[protein] + A + AMP + diphosphate + H(+). In terms of biological role, catalyzes the 2-thiolation of uridine at the wobble position (U34) of tRNA, leading to the formation of s(2)U34. This is tRNA-specific 2-thiouridylase MnmA from Chlamydia felis (strain Fe/C-56) (Chlamydophila felis).